A 307-amino-acid polypeptide reads, in one-letter code: 2-carboxy-1,4-naphthoquinone phytyltransferase (307 aa).

A run of 8 helical transmembrane segments spans residues 27–47, 51–71, 98–118, 125–145, 147–167, 177–197, 223–243, and 284–304; these read MYTV…GLTG, GDVF…INLS, LVFL…MSMS, TVLE…GPPF, LGYL…LAIA, FSWN…IILF, LGSQ…AIGV, and FIAV…YGWA.

The protein belongs to the MenA family. Type 2 subfamily.

The protein localises to the cell inner membrane. The enzyme catalyses 2-carboxy-1,4-naphthoquinone + phytyl diphosphate + H(+) = demethylphylloquinone + CO2 + diphosphate. It participates in cofactor biosynthesis; phylloquinone biosynthesis. Its function is as follows. Involved in the synthesis of phylloquinone (vitamin K1). Catalyzes the transfer of a prenyl chain to 2-carboxy-1,4-naphthoquinone. The chain is 2-carboxy-1,4-naphthoquinone phytyltransferase from Synechocystis sp. (strain ATCC 27184 / PCC 6803 / Kazusa).